The primary structure comprises 299 residues: Tyrosine recombinase XerC (299 aa).

The Core-binding (CB) domain occupies 1 to 85 (MERQLDAYCE…AVRGLYHYLN (85 aa)). Residues 106–285 (RLPKTLDTDR…DFQHLAAVYD (180 aa)) enclose the Tyr recombinase domain. Catalysis depends on residues Arg-146, Lys-170, His-237, Arg-240, and His-263. Tyr-272 acts as the O-(3'-phospho-DNA)-tyrosine intermediate in catalysis.

The protein belongs to the 'phage' integrase family. XerC subfamily. Forms a cyclic heterotetrameric complex composed of two molecules of XerC and two molecules of XerD.

It is found in the cytoplasm. Functionally, site-specific tyrosine recombinase, which acts by catalyzing the cutting and rejoining of the recombining DNA molecules. The XerC-XerD complex is essential to convert dimers of the bacterial chromosome into monomers to permit their segregation at cell division. It also contributes to the segregational stability of plasmids. This is Tyrosine recombinase XerC from Pseudomonas fluorescens (strain Pf0-1).